The sequence spans 233 residues: Small ribosomal subunit protein uS7m (233 aa).

A mitochondrion-targeting transit peptide spans 1-28 (MAAPTAAGLCPRLRAWLPRLTQVRWSRY).

Belongs to the universal ribosomal protein uS7 family. As to quaternary structure, component of the mitochondrial ribosome small subunit (28S) which comprises a 12S rRNA and about 30 distinct proteins.

The protein resides in the mitochondrion. The polypeptide is Small ribosomal subunit protein uS7m (MRPS7) (Gallus gallus (Chicken)).